A 62-amino-acid chain; its full sequence is Cytotoxin 6 (62 aa).

The N-terminal stretch at 1 to 2 (YT) is a signal peptide. Intrachain disulfides connect Cys-5–Cys-23, Cys-16–Cys-40, Cys-44–Cys-55, and Cys-56–Cys-61.

Belongs to the three-finger toxin family. Short-chain subfamily. Type IA cytotoxin sub-subfamily. As to quaternary structure, monomer in solution; Homodimer and oligomer in the presence of negatively charged lipids forming a pore with a size ranging between 20 and 30 Angstroms. As to expression, expressed by the venom gland.

The protein localises to the secreted. The protein resides in the target cell membrane. Shows cytolytic activity on many different cells by forming pore in lipid membranes. In vivo, increases heart rate or kills the animal by cardiac arrest. In addition, it binds to heparin with high affinity, interacts with Kv channel-interacting protein 1 (KCNIP1) in a calcium-independent manner, and binds to integrin alpha-V/beta-3 (ITGAV/ITGB3) with moderate affinity. In Naja sputatrix (Malayan spitting cobra), this protein is Cytotoxin 6.